Reading from the N-terminus, the 294-residue chain is tRNA dimethylallyltransferase (294 aa).

10-17 (GPTAVGKT) serves as a coordination point for ATP. Residue 12-17 (TAVGKT) participates in substrate binding. The interaction with substrate tRNA stretch occupies residues 35-38 (DSQQ).

Belongs to the IPP transferase family. As to quaternary structure, monomer. The cofactor is Mg(2+).

It catalyses the reaction adenosine(37) in tRNA + dimethylallyl diphosphate = N(6)-dimethylallyladenosine(37) in tRNA + diphosphate. Functionally, catalyzes the transfer of a dimethylallyl group onto the adenine at position 37 in tRNAs that read codons beginning with uridine, leading to the formation of N6-(dimethylallyl)adenosine (i(6)A). The chain is tRNA dimethylallyltransferase from Streptococcus pneumoniae (strain ATCC 700669 / Spain 23F-1).